The sequence spans 1055 residues: Activated CDC42 kinase 1 (1055 aa).

Positions 1–110 (MQPEEGTGWL…PSPTPGSLPG (110 aa)) are SAM-like domain. The disordered stretch occupies residues 91–110 (SQHSQSTFRKPSPTPGSLPG). Position 113 is a phosphothreonine (Thr-113). Residues 126 to 385 (LRLLEKLGDG…PTFVALRDFL (260 aa)) form the Protein kinase domain. Residues 132-140 (LGDGSFGVV) and Lys-158 each bind ATP. The Proton acceptor role is filled by Asp-252. Tyr-284 carries the post-translational modification Phosphotyrosine; by SRC and autocatalysis. The SH3 domain maps to 388–448 (AQPTDMRALQ…PRNVVTSVAG (61 aa)). The region spanning 454-466 (ISQPLQNSFIHTG) is the CRIB domain. The interval 505–548 (RPTQHLGRVKREPPPRPPQPAIFTQKTTYDPVSEDPDPLSSDFK) is disordered. Residues Pro-518 and Tyr-533 each carry the phosphotyrosine modification. The required for interaction with SRC stretch occupies residues 638–667 (DWDARPLPPPPAYDDVAQDEDDFEVCSINS). The required for interaction with NEDD4 stretch occupies residues 647–650 (PPAY). Residues 737-855 (TGQLTPSPTP…QVIQAPGPRA (119 aa)) are disordered. Residues 748–891 (GDDKPQVPPR…PYLERYQRFL (144 aa)) form an EBD domain region. Composition is skewed to pro residues over residues 753–764 (QVPPRVPIPPRP) and 787–798 (PASPPRVPPREP). The span at 817–827 (PLPHRLSSSPG) shows a compositional bias: low complexity. A Phosphotyrosine modification is found at Tyr-842. Position 854 is an omega-N-methylarginine (Arg-854). Residues Tyr-874 and Tyr-887 each carry the phosphotyrosine modification. Phosphoserine is present on Ser-896. The tract at residues 896–952 (SPEEPAALPVPPLLPPPSTPAPAAPTATVRPMPQAAPDPKANFSTNNSNPGARPPSL) is disordered. Pro residues predominate over residues 903 to 918 (LPVPPLLPPPSTPAPA). Residues 973–1013 (PADKVQMLQAMVHGVTTEECQAALQSHSWSVQRAAQYLKVE) enclose the UBA domain.

Belongs to the protein kinase superfamily. Tyr protein kinase family. In terms of assembly, homodimer. Interacts with CSPG4 (activated). Interacts with MERTK (activated); stimulates autophosphorylation. May interact (phosphorylated) with HSP90AB1; maintains kinase activity. Interacts with NPHP1. Interacts with SNX9 (via SH3 domain). Interacts with SRC (via SH2 and SH3 domain). Part of a collagen stimulated complex involved in cell migration composed of CDC42, CRK, TNK2 and BCAR1/p130cas. Interacts with BCAR1/p130cas via SH3 domains. Forms complexes with GRB2 and numerous receptor tyrosine kinases (RTK) including LTK, AXL or PDGFRL, in which GRB2 promotes RTK recruitment by TNK2. Interacts with CDC42. Interacts with EGFR, and this interaction is dependent on EGF stimulation and kinase activity of EGFR. Interacts (via kinase domain) with AKT1. Interacts with NEDD4 (via WW3 domain). NEDD4L and EGF promote association with NEDD4. Requires Mg(2+) as cofactor. Autophosphorylation regulates kinase activity. Phosphorylation on Tyr-533 is required for interaction with SRC and is observed during association with clathrin-coated pits. Post-translationally, polyubiquitinated by NEDD4 and NEDD4L. Degradation can be induced by EGF and is lysosome-dependent. In terms of tissue distribution, ubiquitously present in all tissues tested. Highly expressed in the adult central nervous system (CNS); hippocampus, neocortex, and cerebellum, both at dendritic spines and presynaptic axon terminals. Levels are strongly increased during enhanced neural activity.

It localises to the cell membrane. Its subcellular location is the nucleus. It is found in the endosome. The protein localises to the cell junction. The protein resides in the adherens junction. It localises to the cytoplasmic vesicle membrane. Its subcellular location is the cytoplasmic vesicle. It is found in the clathrin-coated vesicle. The protein localises to the membrane. The protein resides in the clathrin-coated pit. It localises to the cytoplasm. Its subcellular location is the cytosol. The enzyme catalyses L-tyrosyl-[protein] + ATP = O-phospho-L-tyrosyl-[protein] + ADP + H(+). It catalyses the reaction L-seryl-[protein] + ATP = O-phospho-L-seryl-[protein] + ADP + H(+). The catalysed reaction is L-threonyl-[protein] + ATP = O-phospho-L-threonyl-[protein] + ADP + H(+). Functionally, non-receptor tyrosine-protein and serine/threonine-protein kinase that is implicated in cell spreading and migration, cell survival, cell growth and proliferation. Transduces extracellular signals to cytosolic and nuclear effectors. Phosphorylates AKT1, AR, MCF2, WASL and WWOX. Implicated in trafficking and clathrin-mediated endocytosis through binding to epidermal growth factor receptor (EGFR) and clathrin. Binds to both poly- and mono-ubiquitin and regulates ligand-induced degradation of EGFR, thereby contributing to the accumulation of EGFR at the limiting membrane of early endosomes. Downstream effector of CDC42 which mediates CDC42-dependent cell migration via phosphorylation of BCAR1. May be involved both in adult synaptic function and plasticity and in brain development. Activates AKT1 by phosphorylating it on 'Tyr-176'. Phosphorylates AR on 'Tyr-267' and 'Tyr-363' thereby promoting its recruitment to androgen-responsive enhancers (AREs). Phosphorylates WWOX on 'Tyr-287'. Phosphorylates MCF2, thereby enhancing its activity as a guanine nucleotide exchange factor (GEF) toward Rho family proteins. Contributes to the control of AXL receptor levels. Confers metastatic properties on cancer cells and promotes tumor growth by negatively regulating tumor suppressor such as WWOX and positively regulating pro-survival factors such as AKT1 and AR. This is Activated CDC42 kinase 1 (Tnk2) from Mus musculus (Mouse).